Here is a 354-residue protein sequence, read N- to C-terminus: Fructose-bisphosphate aldolase (354 aa).

Serine 50 is a D-glyceraldehyde 3-phosphate binding site. Residue aspartate 83 is the Proton donor of the active site. Zn(2+) contacts are provided by histidine 84, aspartate 105, glutamate 142, and histidine 198. Glycine 199 is a binding site for dihydroxyacetone phosphate. Histidine 232 contributes to the Zn(2+) binding site. Residues 233 to 235 and 275 to 278 contribute to the dihydroxyacetone phosphate site; these read GSS and NIDT.

It belongs to the class II fructose-bisphosphate aldolase family. Requires Zn(2+) as cofactor.

It catalyses the reaction beta-D-fructose 1,6-bisphosphate = D-glyceraldehyde 3-phosphate + dihydroxyacetone phosphate. The protein operates within carbohydrate degradation; glycolysis; D-glyceraldehyde 3-phosphate and glycerone phosphate from D-glucose: step 4/4. Functionally, catalyzes the aldol condensation of dihydroxyacetone phosphate (DHAP or glycerone-phosphate) with glyceraldehyde 3-phosphate (G3P) to form fructose 1,6-bisphosphate (FBP) in gluconeogenesis and the reverse reaction in glycolysis. This chain is Fructose-bisphosphate aldolase (fba), found in Pseudomonas aeruginosa (strain ATCC 15692 / DSM 22644 / CIP 104116 / JCM 14847 / LMG 12228 / 1C / PRS 101 / PAO1).